The chain runs to 372 residues: Inner membrane protein YbiR (372 aa).

At 1–13 the chain is on the periplasmic side; the sequence is MSLPFLRTLQGDR. Helical transmembrane passes span 14–34 and 35–55; these read FFQL…FAPK and SWPA…MLLT. Residues 56–85 are Periplasmic-facing; the sequence is KGVELSGYFDVLGRKMVRRFATERRLAMFM. The helical transmembrane segment at 86 to 106 threads the bilayer; sequence VLAAALLSTFLTNDVALFIVV. The Cytoplasmic portion of the chain corresponds to 107 to 122; it reads PLTITLKRLCEIPVNR. Residues 123–143 form a helical membrane-spanning segment; that stretch reads LIIFEALAVNAGSLLTPIGNP. The Periplasmic portion of the chain corresponds to 144 to 155; that stretch reads QNILIWGRSGLS. Residues 156-176 form a helical membrane-spanning segment; the sequence is FAGFIAQMAPLAGAMMLTLLL. The Cytoplasmic segment spans residues 177–208; that stretch reads LCWCCFPGKAMQYHTGVQTPEWKPRLVWSCLG. A helical membrane pass occupies residues 209-229; sequence LYIVFLTALEFKQELWGLVIV. The Periplasmic portion of the chain corresponds to 230–247; that stretch reads AAGFALLARRVVLSVDWT. The helical transmembrane segment at 248-268 threads the bilayer; the sequence is LLLVFMAMFIDVHLLTQLPAL. Over 269 to 283 the chain is Cytoplasmic; it reads QGVLGNVSHLSEPGL. A helical membrane pass occupies residues 284–304; the sequence is WLTAIGLSQVISNVPSTILLL. Over 305–309 the chain is Periplasmic; it reads NYVPP. Residues 310–330 traverse the membrane as a helical segment; sequence SLLLVWAVNVGGFGLLPGSLA. Over 331–348 the chain is Cytoplasmic; that stretch reads NLIALRMANDRRIWWRFH. Residues 349 to 369 traverse the membrane as a helical segment; sequence LYSIPMLLWAALVGYVLLVIL. At 370–372 the chain is on the periplasmic side; it reads PAN.

This sequence belongs to the CitM (TC 2.A.11) transporter family.

The protein resides in the cell inner membrane. This Escherichia coli (strain K12) protein is Inner membrane protein YbiR (ybiR).